The following is a 102-amino-acid chain: Parathymosin (102 aa).

Residues 1–102 (MSEKSVEAAA…RQKTENGASA (102 aa)) form a disordered region. Ser2 is subject to N-acetylserine. Position 2 is a phosphoserine (Ser2). An N6-acetyllysine modification is found at Lys4. Residues Ser5 and Ser13 each carry the phosphoserine modification. The span at 13–37 (SAKDLKEKKEKVEEKAGRKERKKEV) shows a compositional bias: basic and acidic residues. At Lys15 the chain carries N6-acetyllysine. A compositionally biased stretch (acidic residues) spans 38 to 76 (VEEEENGAEEEEEETAEDGEEEDDGDEEDEEEEEEEDEG). Position 52 is a phosphothreonine (Thr52). An N6-acetyllysine modification is found at Lys92.

The protein belongs to the pro/parathymosin family.

Its function is as follows. Parathymosin may mediate immune function by blocking the effect of prothymosin alpha which confers resistance to certain opportunistic infections. This is Parathymosin (PTMS) from Bos taurus (Bovine).